Here is a 261-residue protein sequence, read N- to C-terminus: Hemin import ATP-binding protein HmuV (261 aa).

Residues Leu-2–Asn-243 enclose the ABC transporter domain. Gly-34–Ser-41 is an ATP binding site.

This sequence belongs to the ABC transporter superfamily. Heme (hemin) importer (TC 3.A.1.14.5) family. In terms of assembly, the complex is composed of two ATP-binding proteins (HmuV), two transmembrane proteins (HmuU) and a solute-binding protein (HmuT).

Its subcellular location is the cell inner membrane. In terms of biological role, part of the ABC transporter complex HmuTUV involved in hemin import. Responsible for energy coupling to the transport system. The protein is Hemin import ATP-binding protein HmuV of Pseudoalteromonas translucida (strain TAC 125).